Consider the following 98-residue polypeptide: Cell division protein FtsB (98 aa).

Residues 1–3 (MKR) are Cytoplasmic-facing. A helical transmembrane segment spans residues 4–21 (LLIVLIALLAMLEYRLWF). Residues 22-98 (GDKSLAESFH…GGERDKPSND (77 aa)) are Periplasmic-facing. Positions 31-74 (HLQEQIKLQQQSNAQLVARNQILREEISDLRSGTEALEERARNE) form a coiled coil.

This sequence belongs to the FtsB family. As to quaternary structure, part of a complex composed of FtsB, FtsL and FtsQ.

Its subcellular location is the cell inner membrane. In terms of biological role, essential cell division protein. May link together the upstream cell division proteins, which are predominantly cytoplasmic, with the downstream cell division proteins, which are predominantly periplasmic. This is Cell division protein FtsB from Shewanella halifaxensis (strain HAW-EB4).